The primary structure comprises 226 residues: Cytochrome c oxidase subunit 2 (226 aa).

At 1 to 14 (MAYPLQLGLQDATS) the chain is on the mitochondrial intermembrane side. A helical transmembrane segment spans residues 15 to 45 (PIMEELTSFHDHTLMIVFLISTLVLYIISLM). The Mitochondrial matrix segment spans residues 46-59 (LTTKLTHTSTMDAQ). A helical transmembrane segment spans residues 60 to 87 (EIETIWTILPAIILIMIALPSLRVLYMM). Residues 88 to 226 (DEINNPALTV…KYFEAWSASM (139 aa)) lie on the Mitochondrial intermembrane side of the membrane. The Cu cation site is built by H161, C196, E198, C200, H204, and M207. E198 lines the Mg(2+) pocket. Y218 is subject to Phosphotyrosine.

This sequence belongs to the cytochrome c oxidase subunit 2 family. Component of the cytochrome c oxidase (complex IV, CIV), a multisubunit enzyme composed of 14 subunits. The complex is composed of a catalytic core of 3 subunits MT-CO1, MT-CO2 and MT-CO3, encoded in the mitochondrial DNA, and 11 supernumerary subunits COX4I, COX5A, COX5B, COX6A, COX6B, COX6C, COX7A, COX7B, COX7C, COX8 and NDUFA4, which are encoded in the nuclear genome. The complex exists as a monomer or a dimer and forms supercomplexes (SCs) in the inner mitochondrial membrane with NADH-ubiquinone oxidoreductase (complex I, CI) and ubiquinol-cytochrome c oxidoreductase (cytochrome b-c1 complex, complex III, CIII), resulting in different assemblies (supercomplex SCI(1)III(2)IV(1) and megacomplex MCI(2)III(2)IV(2)). Found in a complex with TMEM177, COA6, COX18, COX20, SCO1 and SCO2. Interacts with TMEM177 in a COX20-dependent manner. Interacts with COX20. Interacts with COX16. It depends on Cu cation as a cofactor.

The protein localises to the mitochondrion inner membrane. The catalysed reaction is 4 Fe(II)-[cytochrome c] + O2 + 8 H(+)(in) = 4 Fe(III)-[cytochrome c] + 2 H2O + 4 H(+)(out). Its function is as follows. Component of the cytochrome c oxidase, the last enzyme in the mitochondrial electron transport chain which drives oxidative phosphorylation. The respiratory chain contains 3 multisubunit complexes succinate dehydrogenase (complex II, CII), ubiquinol-cytochrome c oxidoreductase (cytochrome b-c1 complex, complex III, CIII) and cytochrome c oxidase (complex IV, CIV), that cooperate to transfer electrons derived from NADH and succinate to molecular oxygen, creating an electrochemical gradient over the inner membrane that drives transmembrane transport and the ATP synthase. Cytochrome c oxidase is the component of the respiratory chain that catalyzes the reduction of oxygen to water. Electrons originating from reduced cytochrome c in the intermembrane space (IMS) are transferred via the dinuclear copper A center (CU(A)) of subunit 2 and heme A of subunit 1 to the active site in subunit 1, a binuclear center (BNC) formed by heme A3 and copper B (CU(B)). The BNC reduces molecular oxygen to 2 water molecules using 4 electrons from cytochrome c in the IMS and 4 protons from the mitochondrial matrix. This Perognathus flavus (Silky pocket mouse) protein is Cytochrome c oxidase subunit 2 (MT-CO2).